A 554-amino-acid chain; its full sequence is Hydroxylamine reductase (554 aa).

The [2Fe-2S] cluster site is built by Cys-3, Cys-6, Cys-18, and Cys-25. Hybrid [4Fe-2O-2S] cluster-binding residues include His-252, Glu-276, Cys-320, Cys-408, Cys-436, Cys-461, Glu-495, and Lys-497. At Cys-408 the chain carries Cysteine persulfide.

This sequence belongs to the HCP family. [2Fe-2S] cluster serves as cofactor. It depends on hybrid [4Fe-2O-2S] cluster as a cofactor.

It is found in the cytoplasm. It catalyses the reaction A + NH4(+) + H2O = hydroxylamine + AH2 + H(+). In terms of biological role, catalyzes the reduction of hydroxylamine to form NH(3) and H(2)O. The chain is Hydroxylamine reductase from Shewanella sp. (strain MR-7).